The chain runs to 119 residues: Large ribosomal subunit protein uL18 (119 aa).

Belongs to the universal ribosomal protein uL18 family. Part of the 50S ribosomal subunit; part of the 5S rRNA/L5/L18/L25 subcomplex. Contacts the 5S and 23S rRNAs.

Functionally, this is one of the proteins that bind and probably mediate the attachment of the 5S RNA into the large ribosomal subunit, where it forms part of the central protuberance. This is Large ribosomal subunit protein uL18 from Mesorhizobium japonicum (strain LMG 29417 / CECT 9101 / MAFF 303099) (Mesorhizobium loti (strain MAFF 303099)).